We begin with the raw amino-acid sequence, 293 residues long: 33 kDa chaperonin (293 aa).

Disulfide bonds link C229–C231 and C262–C265.

It belongs to the HSP33 family. Under oxidizing conditions two disulfide bonds are formed involving the reactive cysteines. Under reducing conditions zinc is bound to the reactive cysteines and the protein is inactive.

It localises to the cytoplasm. Redox regulated molecular chaperone. Protects both thermally unfolding and oxidatively damaged proteins from irreversible aggregation. Plays an important role in the bacterial defense system toward oxidative stress. This is 33 kDa chaperonin from Methylobacillus flagellatus (strain ATCC 51484 / DSM 6875 / VKM B-1610 / KT).